Here is a 300-residue protein sequence, read N- to C-terminus: MWFKNLQIYRLPAPWAVSAEQLAADLAPHAFQPCSSLEMQSQGWVSPRENGELVYSLNKQMLLLLGTEKKLLPTTVINQVTKIKAAEIEEQQGFKPGRKQMKEIKEEVTDDLLPRAFSVWRQTWVWIDPVNGWMVVDAGSPAKADEVIKLLVKSVDKLPLETLHVAQSPVTAMTEWLVADTAPHGFTVDQDTELRATGEGKATVRYVRHTLEADDVRRHIASGKQCTRLAMTWADKISFVLTESLTIKRVTPLDVIKENADSTAQNDEERFDSDIMLMTGELSRMLADLVAALGGEVEKK.

The protein belongs to the RdgC family.

It localises to the cytoplasm. It is found in the nucleoid. May be involved in recombination. The sequence is that of Recombination-associated protein RdgC from Janthinobacterium sp. (strain Marseille) (Minibacterium massiliensis).